A 493-amino-acid chain; its full sequence is Galactose-1-phosphate uridylyltransferase (493 aa).

Belongs to the galactose-1-phosphate uridylyltransferase type 2 family.

Its subcellular location is the cytoplasm. It carries out the reaction alpha-D-galactose 1-phosphate + UDP-alpha-D-glucose = alpha-D-glucose 1-phosphate + UDP-alpha-D-galactose. Its pathway is carbohydrate metabolism; galactose metabolism. This chain is Galactose-1-phosphate uridylyltransferase, found in Streptococcus pneumoniae (strain Hungary19A-6).